Here is a 269-residue protein sequence, read N- to C-terminus: Phosphatidate cytidylyltransferase (269 aa).

8 helical membrane passes run 13–33 (LAAI…TILI), 50–70 (LKLV…FLLP), 81–101 (ISKM…TVLV), 110–130 (VGFI…FIEI), 138–158 (LTYI…AYFV), 180–200 (FAGG…VAQL), 201–221 (PIPY…GQLG), and 247–267 (ILDR…LLAL).

It belongs to the CDS family.

The protein resides in the cell membrane. It carries out the reaction a 1,2-diacyl-sn-glycero-3-phosphate + CTP + H(+) = a CDP-1,2-diacyl-sn-glycerol + diphosphate. Its pathway is phospholipid metabolism; CDP-diacylglycerol biosynthesis; CDP-diacylglycerol from sn-glycerol 3-phosphate: step 3/3. The sequence is that of Phosphatidate cytidylyltransferase (cdsA) from Bacillus subtilis (strain 168).